A 182-amino-acid chain; its full sequence is Transcription termination/antitermination protein NusG (182 aa).

In terms of domain architecture, KOW spans 131–163 (VGEQVRIKSGPFANQVGEVQEIEADKFKLTVLV).

The protein belongs to the NusG family.

In terms of biological role, participates in transcription elongation, termination and antitermination. This is Transcription termination/antitermination protein NusG from Staphylococcus carnosus (strain TM300).